The chain runs to 406 residues: Lysosome-associated membrane glycoprotein 1 (406 aa).

The signal sequence occupies residues Met1–Ala24. The segment at Leu25–Asp188 is first lumenal domain. Over Leu25–Asn370 the chain is Lumenal. Residues Asn31, Asn52, Asn58, Asn70, Asn78, Asn97, Asn101, Asn115, Asn159, and Asn177 are each glycosylated (N-linked (GlcNAc...) asparagine). Residues Cys35 and Cys74 are joined by a disulfide bond. The cysteines at positions 149 and 185 are disulfide-linked. A disordered region spans residues Lys180–Asn207. The hinge stretch occupies residues Gly189–Asn218. A compositionally biased stretch (pro residues) spans Thr193–Pro205. Residues Asn214, Asn219, Asn232, and Asn240 are each glycosylated (N-linked (GlcNAc...) asparagine). A second lumenal domain region spans residues Asn219 to Asn370. A disulfide bridge connects residues Cys222 and Cys259. The N-linked (GlcNAc...) (high mannose) asparagine glycan is linked to Asn252. 3 N-linked (GlcNAc...) asparagine glycosylation sites follow: Asn282, Asn296, and Asn311. Cys327 and Cys364 are oxidised to a cystine. The chain crosses the membrane as a helical span at residues Met371–Ile394. Over Gly395 to Ile406 the chain is Cytoplasmic.

This sequence belongs to the LAMP family. Interacts with ABCB9; this interaction strongly stabilizes ABCB9 and protects ABCB9 against lysosomal degradation. Interacts with FURIN. Interacts with TMEM175; inhibiting the proton channel activity of TMEM175. Post-translationally, O- and N-glycosylated; some of the N-glycans attached to LAMP-1 are polylactosaminoglycans.

Its subcellular location is the lysosome membrane. It localises to the endosome membrane. It is found in the late endosome membrane. The protein resides in the cell membrane. The protein localises to the cytolytic granule membrane. Its function is as follows. Lysosomal membrane glycoprotein which plays an important role in lysosome biogenesis, lysosomal pH regulation, autophagy and cholesterol homeostasis. Acts as an important regulator of lysosomal lumen pH regulation by acting as a direct inhibitor of the proton channel TMEM175, facilitating lysosomal acidification for optimal hydrolase activity. Also plays an important role in NK-cells cytotoxicity. Mechanistically, participates in cytotoxic granule movement to the cell surface and perforin trafficking to the lytic granule. In addition, protects NK-cells from degranulation-associated damage induced by their own cytotoxic granule content. Presents carbohydrate ligands to selectins. Also implicated in tumor cell metastasis. The protein is Lysosome-associated membrane glycoprotein 1 (Lamp1) of Mus musculus (Mouse).